A 287-amino-acid chain; its full sequence is uncharacterized protein (287 aa).

The protein belongs to the AllH family.

This is an uncharacterized protein from Escherichia coli (strain K12).